Consider the following 153-residue polypeptide: Ribosome maturation factor RimP (153 aa).

It belongs to the RimP family.

The protein localises to the cytoplasm. Required for maturation of 30S ribosomal subunits. This Clostridium botulinum (strain Loch Maree / Type A3) protein is Ribosome maturation factor RimP.